Consider the following 1053-residue polypeptide: DNA-directed RNA polymerase subunit beta' (1053 aa).

Zn(2+) is bound by residues C60, C62, C75, and C78. Residues D449, D451, and D453 each contribute to the Mg(2+) site. C818, C892, C899, and C902 together coordinate Zn(2+).

Belongs to the RNA polymerase beta' chain family. The RNAP catalytic core consists of 2 alpha, 1 beta, 1 beta' and 1 omega subunit. When a sigma factor is associated with the core the holoenzyme is formed, which can initiate transcription. Requires Mg(2+) as cofactor. Zn(2+) is required as a cofactor.

The catalysed reaction is RNA(n) + a ribonucleoside 5'-triphosphate = RNA(n+1) + diphosphate. Its function is as follows. DNA-dependent RNA polymerase catalyzes the transcription of DNA into RNA using the four ribonucleoside triphosphates as substrates. In Listeria grayi (Listeria murrayi), this protein is DNA-directed RNA polymerase subunit beta'.